An 84-amino-acid polypeptide reads, in one-letter code: N.vectensis toxin 5 (84 aa).

The signal sequence occupies residues 1–21 (MNSLLKVAVVCLVMLVACSSG). Intrachain disulfides connect Cys45–Cys77, Cys47–Cys68, and Cys61–Cys78.

Expressed in ectodermal gland cells. In adult female tissues, highly transcribed in mesenteries (gametes-producing tissue) and slightly transcribed in tentacles, pharynx and physa.

Its function is as follows. Has toxic effects on zebrafish larvae. It causes contractile paralysis and twitching of the tail within 20 minutes, followed by death within 30 minutes. Does not show any toxicity when injected into arthropods (cherry shrimps or grass shrimps). The sequence is that of N.vectensis toxin 5 from Nematostella vectensis (Starlet sea anemone).